The primary structure comprises 259 residues: Insulin-induced gene 1 protein (259 aa).

At M1–L66 the chain is on the cytoplasmic side. Residues P33–A57 are disordered. A helical membrane pass occupies residues V67–I89. The Extracellular portion of the chain corresponds to Q90 to A108. The chain crosses the membrane as a helical span at residues W109 to Y126. Residues P127–R141 lie on the Cytoplasmic side of the membrane. Glycyl lysine isopeptide (Lys-Gly) (interchain with G-Cter in ubiquitin) cross-links involve residues K138 and K140. A helical transmembrane segment spans residues E142–D164. Residues F165–N167 lie on the Extracellular side of the membrane. Residues N168 to F186 form a helical membrane-spanning segment. Topologically, residues D187–S191 are cytoplasmic. At S189 the chain carries Phosphoserine. The chain crosses the membrane as a helical span at residues G192–N213. Over G214 to R227 the chain is Extracellular. The chain crosses the membrane as a helical span at residues S228–G245. Topologically, residues R246 to D259 are cytoplasmic. Residues P253–D259 carry the KxHxx motif.

This sequence belongs to the INSIG family. Interacts with SCAP; interaction is direct and only takes place in the presence of sterols; it prevents interaction between SCAP and the coat protein complex II (COPII). Associates with the SCAP-SREBP complex (composed of SCAP and SREBF1/SREBP1 or SREBF2/SREBP2); association is mediated via its interaction with SCAP and only takes place in the presence of sterols. Interaction with SCAP is mutually exclusive with PAQR3. Interacts with HMGCR (via its SSD); the interaction, accelerated by sterols, leads to the recruitment of HMGCR to AMFR/gp78 for its ubiquitination by the sterol-mediated ERAD pathway. Interacts with AMFR/gp78 (via its membrane domain); the interaction recruits HMCR at the ER membrane for its ubiquitination and degradation by the sterol-mediated ERAD pathway. Interacts with SOAT2/ACAT2; leading to promote recruitment of AMFR/gp78 and subsequent ubiquitination of SOAT2/ACAT2. Interacts with RNF139. Interacts with RNF145. In terms of processing, phosphorylation at Ser-189 by PCK1 reduces binding to oxysterol, disrupting the interaction between INSIG1 and SCAP, thereby promoting nuclear translocation of SREBP proteins (SREBF1/SREBP1 or SREBF2/SREBP2) and subsequent transcription of downstream lipogenesis-related genes. Post-translationally, ubiquitinated by AMFR/gp78 in response to sterol deprivation, leading to its degradation: when the SCAP-SREBP complex becomes dissociated from INSIG1, INSIG1 is then ubiquitinated and degraded in proteasomes. Although ubiquitination is required for rapid INSIG1 degradation, it is not required for release of the SCAP-SREBP complex. Ubiquitinated by RNF139. In terms of tissue distribution, highly expressed in liver and kidney.

The protein localises to the endoplasmic reticulum membrane. In terms of biological role, oxysterol-binding protein that mediates feedback control of cholesterol synthesis by controlling both endoplasmic reticulum to Golgi transport of SCAP and degradation of HMGCR. Acts as a negative regulator of cholesterol biosynthesis by mediating the retention of the SCAP-SREBP complex in the endoplasmic reticulum, thereby blocking the processing of sterol regulatory element-binding proteins (SREBPs) SREBF1/SREBP1 and SREBF2/SREBP2. Binds oxysterol, including 25-hydroxycholesterol, regulating interaction with SCAP and retention of the SCAP-SREBP complex in the endoplasmic reticulum. In presence of oxysterol, interacts with SCAP, retaining the SCAP-SREBP complex in the endoplasmic reticulum, thereby preventing SCAP from escorting SREBF1/SREBP1 and SREBF2/SREBP2 to the Golgi. Sterol deprivation or phosphorylation by PCK1 reduce oxysterol-binding, disrupting the interaction between INSIG1 and SCAP, thereby promoting Golgi transport of the SCAP-SREBP complex, followed by processing and nuclear translocation of SREBF1/SREBP1 and SREBF2/SREBP2. Also regulates cholesterol synthesis by regulating degradation of HMGCR: initiates the sterol-mediated ubiquitin-mediated endoplasmic reticulum-associated degradation (ERAD) of HMGCR via recruitment of the reductase to the ubiquitin ligases AMFR/gp78 and/or RNF139. Also regulates degradation of SOAT2/ACAT2 when the lipid levels are low: initiates the ubiquitin-mediated degradation of SOAT2/ACAT2 via recruitment of the ubiquitin ligases AMFR/gp78. The polypeptide is Insulin-induced gene 1 protein (Rattus norvegicus (Rat)).